A 209-amino-acid chain; its full sequence is Endoplasmic reticulum vesicle protein 25 (209 aa).

Residues 1 to 18 form the signal peptide; sequence MKYTTFGIISLFLSVTWA. Topologically, residues 19 to 178 are lumenal; it reads LRFELAASFE…TNESTNRRVR (160 aa). A GOLD domain is found at 31 to 119; that stretch reads PFCIRDFVEA…MRNVEVNIES (89 aa). A helical transmembrane segment spans residues 179-199; it reads NFSMAVIVVFAALCAWQLNYL. Residues 200-209 are Cytoplasmic-facing; it reads KNYFRAKHII.

It belongs to the EMP24/GP25L family.

The protein resides in the endoplasmic reticulum membrane. The protein localises to the golgi apparatus membrane. Its function is as follows. Constituent of COPII-coated endoplasmic reticulum-derived transport vesicles. Required for efficient transport of a subset of secretory proteins to the Golgi. Facilitates retrograde transport from the Golgi to the endoplasmic reticulum. In Eremothecium gossypii (strain ATCC 10895 / CBS 109.51 / FGSC 9923 / NRRL Y-1056) (Yeast), this protein is Endoplasmic reticulum vesicle protein 25 (ERV25).